A 314-amino-acid chain; its full sequence is Ribosomal RNA small subunit methyltransferase A (314 aa).

6 residues coordinate S-adenosyl-L-methionine: Asn29, Val31, Gly56, Glu77, Asp107, and Asn126. The tract at residues 291–314 is disordered; it reads PKADDAGDDADAQAKADGAQVSTL. Over residues 303 to 314 the composition is skewed to low complexity; that stretch reads QAKADGAQVSTL.

It belongs to the class I-like SAM-binding methyltransferase superfamily. rRNA adenine N(6)-methyltransferase family. RsmA subfamily.

Its subcellular location is the cytoplasm. The catalysed reaction is adenosine(1518)/adenosine(1519) in 16S rRNA + 4 S-adenosyl-L-methionine = N(6)-dimethyladenosine(1518)/N(6)-dimethyladenosine(1519) in 16S rRNA + 4 S-adenosyl-L-homocysteine + 4 H(+). Specifically dimethylates two adjacent adenosines (A1518 and A1519) in the loop of a conserved hairpin near the 3'-end of 16S rRNA in the 30S particle. May play a critical role in biogenesis of 30S subunits. The polypeptide is Ribosomal RNA small subunit methyltransferase A (Mycolicibacterium gilvum (strain PYR-GCK) (Mycobacterium gilvum (strain PYR-GCK))).